A 948-amino-acid polypeptide reads, in one-letter code: Protocadherin alpha-10 (948 aa).

A signal peptide spans 1–28; sequence MVSRCSCLGVQCLLLSLLLLAAWEVGSG. 6 Cadherin domains span residues 29 to 132, 133 to 241, 242 to 349, 350 to 454, 455 to 564, and 587 to 689; these read QLHY…PPRF, SVTE…APIF, DRPV…SPEV, IVTS…APAF, AQPE…APAL, and GHVV…APEV. At 29 to 695 the chain is on the extracellular side; the sequence is QLHYSVYEEA…APEVALVDVN (667 aa). N-linked (GlcNAc...) asparagine glycosylation is found at Asn-256 and Asn-264. N-linked (GlcNAc...) asparagine glycosylation occurs at Asn-547. Residues 696-716 form a helical membrane-spanning segment; the sequence is VYLIIAICAVSSLLVLTLLLY. Topologically, residues 717-948 are cytoplasmic; the sequence is TALRCSAAPT…GNSTTDNSDQ (232 aa). 6 PXXP repeats span residues 732–735, 772–775, 797–800, 830–833, 871–874, and 889–892; these read PVKP, PSLP, PRQP, PGGP, PGNP, and PGSP. The 6 X 4 AA repeats of P-X-X-P stretch occupies residues 732–892; sequence PVKPTLVCSS…PDKFIIPGSP (161 aa). Disordered stretches follow at residues 783–804 and 827–948; these read DGED…NPDW and RAGP…NSDQ. Residues 907–921 show a composition bias toward basic and acidic residues; it reads DKSDFITFGKKEETK.

Its subcellular location is the cell membrane. In terms of biological role, potential calcium-dependent cell-adhesion protein. May be involved in the establishment and maintenance of specific neuronal connections in the brain. The protein is Protocadherin alpha-10 (PCDHA10) of Pan troglodytes (Chimpanzee).